The following is a 236-amino-acid chain: Purine nucleoside phosphorylase DeoD-type (236 aa).

Histidine 4 provides a ligand contact to a purine D-ribonucleoside. Phosphate-binding positions include glycine 20, arginine 24, arginine 43, and 87–90 (RVGT). A purine D-ribonucleoside is bound by residues 179–181 (EME) and 203–204 (SD). The active-site Proton donor is the aspartate 204.

It belongs to the PNP/UDP phosphorylase family. In terms of assembly, homohexamer; trimer of homodimers.

It carries out the reaction a purine D-ribonucleoside + phosphate = a purine nucleobase + alpha-D-ribose 1-phosphate. It catalyses the reaction a purine 2'-deoxy-D-ribonucleoside + phosphate = a purine nucleobase + 2-deoxy-alpha-D-ribose 1-phosphate. In terms of biological role, catalyzes the reversible phosphorolytic breakdown of the N-glycosidic bond in the beta-(deoxy)ribonucleoside molecules, with the formation of the corresponding free purine bases and pentose-1-phosphate. The protein is Purine nucleoside phosphorylase DeoD-type of Streptococcus pneumoniae (strain JJA).